The chain runs to 1306 residues: Synergin gamma (1306 aa).

Residues 113–153 adopt a coiled-coil conformation; that stretch reads MQKQFAEEQQKRFEQQQKLLEEERKRRQFEEQKQKLRLLSS. Disordered stretches follow at residues 176 to 196 and 252 to 285; these read GFSR…KQGP and SGPA…PAQS. The segment covering 258 to 272 has biased composition (basic and acidic residues); that stretch reads EAEKTSDQTLSKEES. The EH domain occupies 293–404; it reads NESLVPDAYK…TPVSQPTAMP (112 aa). The DFXDF motif 1 signature appears at 455–459; that stretch reads DFQDF. The segment at 460–494 is disordered; sequence QDASKSGSIDDSFTDFQEMPASSKTSNSQHGNSAP. Phosphoserine is present on Ser471. The residue at position 509 (Lys509) is an N6-acetyllysine. The segment at 514–778 is interaction with AP1G1; that stretch reads KGISTDKPSE…ADFHSSKFSS (265 aa). The tract at residues 559-601 is disordered; the sequence is STGTDDGFTDFKTADSVSPLEPPTKDTFPSAFASGAAQQTQTQ. Ser576 is modified (phosphoserine). Residues 661–673 form an interaction with AP1G1, AP1G2 and GGA1 region; that stretch reads LADDFGEFNLFGE. Positions 685 to 689 match the DFXDF motif 2 motif; that stretch reads DFADF. The interval 697 to 730 is disordered; it reads ISSEPKASDKYEALREEVSPSPLSSSTVEGAQHP. The segment covering 702 to 714 has biased composition (basic and acidic residues); that stretch reads KASDKYEALREEV. Phosphoserine is present on Ser715. An N6-acetyllysine modification is found at Lys736. Residues Ser744 and Ser764 each carry the phosphoserine modification. Residues 767–771 carry the DFXDF motif 3 motif; it reads DFADF. 12 positions are modified to phosphoserine: Ser804, Ser844, Ser847, Ser901, Ser911, Ser927, Ser974, Ser998, Ser1065, Ser1067, Ser1079, and Ser1090. Disordered stretches follow at residues 986–1016 and 1065–1090; these read PTVD…ADDF and SLSL…RDRS. A compositionally biased stretch (polar residues) spans 993 to 1005; that stretch reads ETSCPSPASSVAS. Residue Thr1092 is modified to Phosphothreonine.

In terms of assembly, self-associates. Interacts with GGA1 (via GAE domain). Interacts with GGA2 and GGA3. Interacts with AP1G1 (via GAE domain), a subunit of adapter protein complex AP-1. Interacts with AP1G2 (via GAE domain) a subunit of adapter protein complex AP-1. Component of the aftiphilin/p200/gamma-synergin complex, at least composed of AFTPH/aftiphilin, HEATR5B/p200a and SYNRG/gamma-synergin, which plays a role in the AP1G1/AP-1-mediated trafficking of transferrin from early to recycling endosomes. Within the complex interacts with AFTPH/aftiphilin and HEATR5B/p200a; the interactions are direct. Interacts (via EH domain) with SCAMP1.

Its subcellular location is the cytoplasm. It is found in the cytosol. The protein localises to the golgi apparatus. The protein resides in the trans-Golgi network membrane. It localises to the perinuclear region. Its subcellular location is the cytoplasmic vesicle. It is found in the clathrin-coated vesicle. Functionally, plays a role in endocytosis and/or membrane trafficking at the trans-Golgi network (TGN). May act by linking the adapter protein complex AP-1 to other proteins. Component of clathrin-coated vesicles. Component of the aftiphilin/p200/gamma-synergin complex, which plays roles in AP1G1/AP-1-mediated protein trafficking including the trafficking of transferrin from early to recycling endosomes, and the membrane trafficking of furin and the lysosomal enzyme cathepsin D between the trans-Golgi network (TGN) and endosomes. The sequence is that of Synergin gamma (Synrg) from Mus musculus (Mouse).